The sequence spans 305 residues: UDP-3-O-acyl-N-acetylglucosamine deacetylase (305 aa).

Zn(2+) is bound by residues His-79, His-238, and Asp-242. Residue His-265 is the Proton donor of the active site.

This sequence belongs to the LpxC family. Requires Zn(2+) as cofactor.

It catalyses the reaction a UDP-3-O-[(3R)-3-hydroxyacyl]-N-acetyl-alpha-D-glucosamine + H2O = a UDP-3-O-[(3R)-3-hydroxyacyl]-alpha-D-glucosamine + acetate. It functions in the pathway glycolipid biosynthesis; lipid IV(A) biosynthesis; lipid IV(A) from (3R)-3-hydroxytetradecanoyl-[acyl-carrier-protein] and UDP-N-acetyl-alpha-D-glucosamine: step 2/6. In terms of biological role, catalyzes the hydrolysis of UDP-3-O-myristoyl-N-acetylglucosamine to form UDP-3-O-myristoylglucosamine and acetate, the committed step in lipid A biosynthesis. This Vibrio parahaemolyticus serotype O3:K6 (strain RIMD 2210633) protein is UDP-3-O-acyl-N-acetylglucosamine deacetylase.